The chain runs to 337 residues: MKKMPLFSKSHKNPAEIVKILKDNLAILEKQDKKTDKASEEVSKSLQAMKEILCGTNDKEPPTEAVAQLAQELYSSGLLVTLIADLQLIDFEGKKDVTQIFNNILRRQIGTRCPTVEYISSHPHILFMLLKGYEAPQIALRCGIMLRECIRHEPLAKIILFSNQFRDFFKYVELSTFDIASDAFATFKDLLTRHKVLVADFLEQNYDTIFEDYEKLLQSENYVTKRQSLKLLGELILDRHNFTIMTKYISKPENLKLMMNLLRDKSPNIQFEAFHVFKVFVASPHKTQPIVEILLKNQPKLIEFLSSFQKERTDDEQFADEKNYLIKQIRDLKKAAP.

It belongs to the Mo25 family. As to quaternary structure, component of a trimeric complex composed of STK11/LKB1, STRAD (STRADA or STRADB) and CAB39/MO25 (CAB39/MO25alpha or CAB39L/MO25beta): the complex tethers STK11/LKB1 in the cytoplasm and stimulates its catalytic activity.

Its function is as follows. Component of a complex that binds and activates STK11/LKB1. In the complex, required to stabilize the interaction between CAB39/MO25 (CAB39/MO25alpha or CAB39L/MO25beta) and STK11/LKB1. This chain is Calcium-binding protein 39-like (Cab39l), found in Mus musculus (Mouse).